A 151-amino-acid chain; its full sequence is Macrodomain Ter protein (151 aa).

It belongs to the MatP family. As to quaternary structure, homodimer.

The protein localises to the cytoplasm. Its function is as follows. Required for spatial organization of the terminus region of the chromosome (Ter macrodomain) during the cell cycle. Prevents early segregation of duplicated Ter macrodomains during cell division. Binds specifically to matS, which is a 13 bp signature motif repeated within the Ter macrodomain. This Yersinia pseudotuberculosis serotype IB (strain PB1/+) protein is Macrodomain Ter protein.